Here is a 521-residue protein sequence, read N- to C-terminus: Maturase K (521 aa).

This sequence belongs to the intron maturase 2 family. MatK subfamily.

The protein localises to the plastid. It is found in the chloroplast. Functionally, usually encoded in the trnK tRNA gene intron. Probably assists in splicing its own and other chloroplast group II introns. This is Maturase K from Anthericum liliago (St-Bernard's lily).